We begin with the raw amino-acid sequence, 481 residues long: Proline--tRNA ligase (481 aa).

It belongs to the class-II aminoacyl-tRNA synthetase family. ProS type 3 subfamily. Homodimer.

The protein resides in the cytoplasm. It carries out the reaction tRNA(Pro) + L-proline + ATP = L-prolyl-tRNA(Pro) + AMP + diphosphate. In terms of biological role, catalyzes the attachment of proline to tRNA(Pro) in a two-step reaction: proline is first activated by ATP to form Pro-AMP and then transferred to the acceptor end of tRNA(Pro). This is Proline--tRNA ligase from Saccharolobus islandicus (strain Y.N.15.51 / Yellowstone #2) (Sulfolobus islandicus).